The chain runs to 215 residues: Ubiquitin-conjugating enzyme E2 S (215 aa).

A UBC core domain is found at 9–155 (DVIKRVVKEL…AKLFTSIHAS (147 aa)). Cys93 functions as the Glycyl thioester intermediate in the catalytic mechanism. The tract at residues 159-215 (IDSNNNNENSTTTPTTTTTATTPSTNTASISSPVKKKTETTNSTTTKVQPKKSLKRL) is disordered. A compositionally biased stretch (low complexity) spans 161–190 (SNNNNENSTTTPTTTTTATTPSTNTASISS).

The protein belongs to the ubiquitin-conjugating enzyme family.

It carries out the reaction S-ubiquitinyl-[E1 ubiquitin-activating enzyme]-L-cysteine + [E2 ubiquitin-conjugating enzyme]-L-cysteine = [E1 ubiquitin-activating enzyme]-L-cysteine + S-ubiquitinyl-[E2 ubiquitin-conjugating enzyme]-L-cysteine.. It participates in protein modification; protein ubiquitination. Catalyzes the covalent attachment of ubiquitin to other proteins. Acts as an essential factor of the anaphase promoting complex/cyclosome (APC/C), a cell cycle-regulated ubiquitin ligase that controls progression through mitosis. Acts by specifically elongating polyubiquitin chains initiated by the E2 enzyme ubch10 on APC/C substrates, enhancing the degradation of APC/C substrates by the proteasome and promoting mitotic exit. The chain is Ubiquitin-conjugating enzyme E2 S (ube2s) from Dictyostelium discoideum (Social amoeba).